The primary structure comprises 461 residues: Asparagine--tRNA ligase (461 aa).

Belongs to the class-II aminoacyl-tRNA synthetase family. Homodimer.

The protein localises to the cytoplasm. It carries out the reaction tRNA(Asn) + L-asparagine + ATP = L-asparaginyl-tRNA(Asn) + AMP + diphosphate + H(+). This is Asparagine--tRNA ligase from Geobacter sulfurreducens (strain ATCC 51573 / DSM 12127 / PCA).